The following is a 342-amino-acid chain: Ketol-acid reductoisomerase (NADP(+)) (342 aa).

The region spanning 2 to 182 is the KARI N-terminal Rossmann domain; the sequence is AELFYDDDAD…GGLRAAGIKT (181 aa). Residues 25–28, Arg-48, Ser-51, Ser-53, and 83–86 contribute to the NADP(+) site; these read YGSQ and DQHQ. His-108 is a catalytic residue. Position 134 (Gly-134) interacts with NADP(+). In terms of domain architecture, KARI C-terminal knotted spans 183–328; sequence TFTEETETDL…RELRKLFAWV (146 aa). Asp-191, Glu-195, Glu-227, and Glu-231 together coordinate Mg(2+). Ser-252 contributes to the substrate binding site.

The protein belongs to the ketol-acid reductoisomerase family. Requires Mg(2+) as cofactor.

The enzyme catalyses (2R)-2,3-dihydroxy-3-methylbutanoate + NADP(+) = (2S)-2-acetolactate + NADPH + H(+). It carries out the reaction (2R,3R)-2,3-dihydroxy-3-methylpentanoate + NADP(+) = (S)-2-ethyl-2-hydroxy-3-oxobutanoate + NADPH + H(+). It functions in the pathway amino-acid biosynthesis; L-isoleucine biosynthesis; L-isoleucine from 2-oxobutanoate: step 2/4. It participates in amino-acid biosynthesis; L-valine biosynthesis; L-valine from pyruvate: step 2/4. In terms of biological role, involved in the biosynthesis of branched-chain amino acids (BCAA). Catalyzes an alkyl-migration followed by a ketol-acid reduction of (S)-2-acetolactate (S2AL) to yield (R)-2,3-dihydroxy-isovalerate. In the isomerase reaction, S2AL is rearranged via a Mg-dependent methyl migration to produce 3-hydroxy-3-methyl-2-ketobutyrate (HMKB). In the reductase reaction, this 2-ketoacid undergoes a metal-dependent reduction by NADPH to yield (R)-2,3-dihydroxy-isovalerate. The protein is Ketol-acid reductoisomerase (NADP(+)) of Beutenbergia cavernae (strain ATCC BAA-8 / DSM 12333 / CCUG 43141 / JCM 11478 / NBRC 16432 / NCIMB 13614 / HKI 0122).